The chain runs to 179 residues: Cytochrome b6-f complex iron-sulfur subunit 1 (179 aa).

Residues 21–43 (LLTFGTVTGVALGALYPVVNYFI) traverse the membrane as a helical segment. In terms of domain architecture, Rieske spans 61–162 (GNDVSVSKFL…AKTENDKIVL (102 aa)). Cys108, His110, Cys126, and His129 together coordinate [2Fe-2S] cluster. A disulfide bridge links Cys113 with Cys128.

The protein belongs to the Rieske iron-sulfur protein family. The 4 large subunits of the cytochrome b6-f complex are cytochrome b6, subunit IV (17 kDa polypeptide, PetD), cytochrome f and the Rieske protein, while the 4 small subunits are PetG, PetL, PetM and PetN. The complex functions as a dimer. It depends on [2Fe-2S] cluster as a cofactor.

The protein localises to the cellular thylakoid membrane. It carries out the reaction 2 oxidized [plastocyanin] + a plastoquinol + 2 H(+)(in) = 2 reduced [plastocyanin] + a plastoquinone + 4 H(+)(out). In terms of biological role, component of the cytochrome b6-f complex, which mediates electron transfer between photosystem II (PSII) and photosystem I (PSI), cyclic electron flow around PSI, and state transitions. This is Cytochrome b6-f complex iron-sulfur subunit 1 from Nostoc sp. (strain PCC 7120 / SAG 25.82 / UTEX 2576).